The sequence spans 411 residues: Arginine deiminase (411 aa).

C401 (amidino-cysteine intermediate) is an active-site residue.

This sequence belongs to the arginine deiminase family.

It localises to the cytoplasm. It carries out the reaction L-arginine + H2O = L-citrulline + NH4(+). The protein operates within amino-acid degradation; L-arginine degradation via ADI pathway; carbamoyl phosphate from L-arginine: step 1/2. The polypeptide is Arginine deiminase (Staphylococcus aureus (strain JH9)).